A 248-amino-acid polypeptide reads, in one-letter code: 3-deoxy-manno-octulosonate cytidylyltransferase (248 aa).

It belongs to the KdsB family.

The protein resides in the cytoplasm. It catalyses the reaction 3-deoxy-alpha-D-manno-oct-2-ulosonate + CTP = CMP-3-deoxy-beta-D-manno-octulosonate + diphosphate. It participates in nucleotide-sugar biosynthesis; CMP-3-deoxy-D-manno-octulosonate biosynthesis; CMP-3-deoxy-D-manno-octulosonate from 3-deoxy-D-manno-octulosonate and CTP: step 1/1. It functions in the pathway bacterial outer membrane biogenesis; lipopolysaccharide biosynthesis. In terms of biological role, activates KDO (a required 8-carbon sugar) for incorporation into bacterial lipopolysaccharide in Gram-negative bacteria. The chain is 3-deoxy-manno-octulosonate cytidylyltransferase from Chlorobaculum parvum (strain DSM 263 / NCIMB 8327) (Chlorobium vibrioforme subsp. thiosulfatophilum).